We begin with the raw amino-acid sequence, 446 residues long: RUN domain-containing protein 3A (446 aa).

The tract at residues 1 to 298 (METSFVQTTM…LQLQLEEAAA (298 aa)) is interaction with RAP2A. Residues 52-189 (DDSSEEFVNF…IDFSFCLKGE (138 aa)) form the RUN domain. T215 carries the phosphothreonine modification. A disordered region spans residues 216–239 (DEEERHSAESSTSEDNSPEHPYLP). S232 carries the phosphoserine modification. The stretch at 267 to 322 (YLEELVRLRESQLKDLEAENRRLQLQLEEAAAQNQREKRELEGVILELQEQLTGLI) forms a coiled coil. The span at 372–384 (PLSAEASLSSDSQ) shows a compositional bias: polar residues. Residues 372–404 (PLSAEASLSSDSQRLGEGTRDEEPWGPIGKDPT) form a disordered region. Phosphoserine occurs at positions 416 and 419.

It belongs to the RUNDC3 family. As to quaternary structure, interacts with the GTP-bound form of RAP2A.

In terms of biological role, may act as an effector of RAP2A in neuronal cells. The protein is RUN domain-containing protein 3A (RUNDC3A) of Pongo abelii (Sumatran orangutan).